The primary structure comprises 372 residues: DNA-directed RNA polymerase subunit alpha (372 aa).

Residues 1-268 (MIFDEDSNSV…DQFQPFINFD (268 aa)) form an alpha N-terminal domain (alpha-NTD) region. Residues 280-372 (KDALPYDSNL…ESLSKQYSEE (93 aa)) are alpha C-terminal domain (alpha-CTD).

This sequence belongs to the RNA polymerase alpha chain family. As to quaternary structure, homodimer. The RNAP catalytic core consists of 2 alpha, 1 beta, 1 beta' and 1 omega subunit. When a sigma factor is associated with the core the holoenzyme is formed, which can initiate transcription.

The catalysed reaction is RNA(n) + a ribonucleoside 5'-triphosphate = RNA(n+1) + diphosphate. DNA-dependent RNA polymerase catalyzes the transcription of DNA into RNA using the four ribonucleoside triphosphates as substrates. The chain is DNA-directed RNA polymerase subunit alpha from Ehrlichia canis (strain Jake).